A 243-amino-acid chain; its full sequence is MALFRGMWSVLKALGRTGVEMCAGCGGRIPSSISLVCIPKCFSSMGSYPKKPMSSYLRFSTEQLPKFKAKHPDAKLSELVRKIAALWRELPEAEKKVYEADFKAEWKAYKEAVSKYKEQLTPSQLMGMEKEARQRRLKKKALVKRRELILLGKPKRPRSAYNIYVSESFQEAKDDSAQGKLKLVNEAWKNLSPEEKQAYIQLAKDDRIRYDNEMKSWEEQMAEVGRSDLIRRSVKRSGDISEH.

A mitochondrion-targeting transit peptide spans 1–42; sequence MALFRGMWSVLKALGRTGVEMCAGCGGRIPSSISLVCIPKCF. The HMG box 1 DNA-binding region spans 49–117; the sequence is PKKPMSSYLR…AYKEAVSKYK (69 aa). Phosphoserine; by PKA is present on residues serine 54, serine 55, and serine 60. Lysine 66 bears the N6-succinyllysine mark. At threonine 121 the chain carries Phosphothreonine. Residues 154–218 constitute a DNA-binding region (HMG box 2); that stretch reads PKRPRSAYNI…RYDNEMKSWE (65 aa). Serine 159 is subject to Phosphoserine; by PKA. Serine 192 is subject to Phosphoserine.

Monomer; binds DNA as a monomer. Homodimer. Component of the mitochondrial transcription initiation complex, composed at least of TFB2M, TFAM and POLRMT. In this complex TFAM recruits POLRMT to the promoter whereas TFB2M induces structural changes in POLRMT to enable promoter opening and trapping of the DNA non-template strand. Upon metabolic stress, forms a complex composed of FOXO3, SIRT3, TFAM and POLRMT. Interacts with TFB1M and TFB2M. Interacts with CLPX; this enhances DNA-binding. Post-translationally, phosphorylation by PKA within the HMG box 1 impairs DNA binding and promotes degradation by the AAA+ Lon protease. In terms of tissue distribution, the mitochondrial isoform is widely expressed while the nuclear isoform is testis-specific.

Its subcellular location is the mitochondrion. It localises to the mitochondrion matrix. The protein localises to the mitochondrion nucleoid. The protein resides in the nucleus. Functionally, binds to the mitochondrial light strand promoter and functions in mitochondrial transcription regulation. Component of the mitochondrial transcription initiation complex, composed at least of TFB2M, TFAM and POLRMT that is required for basal transcription of mitochondrial DNA. In this complex, TFAM recruits POLRMT to a specific promoter whereas TFB2M induces structural changes in POLRMT to enable promoter opening and trapping of the DNA non-template strand. Required for accurate and efficient promoter recognition by the mitochondrial RNA polymerase. Promotes transcription initiation from the HSP1 and the light strand promoter by binding immediately upstream of transcriptional start sites. Is able to unwind DNA. Bends the mitochondrial light strand promoter DNA into a U-turn shape via its HMG boxes. Required for maintenance of normal levels of mitochondrial DNA. May play a role in organizing and compacting mitochondrial DNA. Its function is as follows. May also function as a transcriptional activator or may have a structural role in the compaction of nuclear DNA during spermatogenesis. This is Transcription factor A, mitochondrial from Mus musculus (Mouse).